Reading from the N-terminus, the 94-residue chain is Pyrimidine/purine nucleoside phosphorylase (94 aa).

This sequence belongs to the nucleoside phosphorylase PpnP family.

The catalysed reaction is a purine D-ribonucleoside + phosphate = a purine nucleobase + alpha-D-ribose 1-phosphate. It carries out the reaction adenosine + phosphate = alpha-D-ribose 1-phosphate + adenine. It catalyses the reaction cytidine + phosphate = cytosine + alpha-D-ribose 1-phosphate. The enzyme catalyses guanosine + phosphate = alpha-D-ribose 1-phosphate + guanine. The catalysed reaction is inosine + phosphate = alpha-D-ribose 1-phosphate + hypoxanthine. It carries out the reaction thymidine + phosphate = 2-deoxy-alpha-D-ribose 1-phosphate + thymine. It catalyses the reaction uridine + phosphate = alpha-D-ribose 1-phosphate + uracil. The enzyme catalyses xanthosine + phosphate = alpha-D-ribose 1-phosphate + xanthine. Its function is as follows. Catalyzes the phosphorolysis of diverse nucleosides, yielding D-ribose 1-phosphate and the respective free bases. Can use uridine, adenosine, guanosine, cytidine, thymidine, inosine and xanthosine as substrates. Also catalyzes the reverse reactions. The polypeptide is Pyrimidine/purine nucleoside phosphorylase (Escherichia fergusonii (strain ATCC 35469 / DSM 13698 / CCUG 18766 / IAM 14443 / JCM 21226 / LMG 7866 / NBRC 102419 / NCTC 12128 / CDC 0568-73)).